The following is an 89-amino-acid chain: UPF0298 protein GTNG_0961 (89 aa).

It belongs to the UPF0298 family.

The protein localises to the cytoplasm. The sequence is that of UPF0298 protein GTNG_0961 from Geobacillus thermodenitrificans (strain NG80-2).